A 185-amino-acid polypeptide reads, in one-letter code: Ribosome-recycling factor (185 aa).

The protein belongs to the RRF family.

It is found in the cytoplasm. In terms of biological role, responsible for the release of ribosomes from messenger RNA at the termination of protein biosynthesis. May increase the efficiency of translation by recycling ribosomes from one round of translation to another. The protein is Ribosome-recycling factor of Listeria monocytogenes serotype 4a (strain HCC23).